The primary structure comprises 236 residues: EP300-interacting inhibitor of differentiation 2 (236 aa).

Residues 1–15 (MSQLPAVSSAPQTGA) show a composition bias toward polar residues. The tract at residues 1-102 (MSQLPAVSSA…REGPAAAAAS (102 aa)) is disordered. Composition is skewed to low complexity over residues 32–68 (RALP…GRVA) and 75–102 (AAAA…AAAS). Omega-N-methylarginine is present on residues Arg-63 and Arg-79. Positions 170–190 (RIQELEERRRRFVEACRAREA) form a coiled coil.

In terms of assembly, heterodimer with EID2B. Interacts with the C-terminus of EP300. Interacts with HDAC1 and HDAC2. Interacts with SMAD2, SMAD4 and with the MH2 domain of SMAD3. Expressed in heart, brain, kidney and pancreas. Not detected in placenta.

The protein resides in the nucleus. Its function is as follows. Interacts with EP300 and acts as a repressor of MYOD-dependent transcription and muscle differentiation. Inhibits EP300 histone acetyltransferase activity. Acts as a repressor of TGFB/SMAD transcriptional responses. May act as a repressor of the TGFB/SMAD3-dependent signaling by selectively blocking formation of TGFB-induced SMAD3-SMAD4 complex. This Mus musculus (Mouse) protein is EP300-interacting inhibitor of differentiation 2.